A 421-amino-acid polypeptide reads, in one-letter code: ATP-dependent RNA helicase RhlB (421 aa).

The Q motif signature appears at 9-37; that stretch reads QKFSDFALHPKVIEALENKGFHNCTPIQA. Residues 40–219 form the Helicase ATP-binding domain; the sequence is LPLTLAGRDV…FEQMNNAEYV (180 aa). 53-60 contributes to the ATP binding site; the sequence is AQTGTGKT. A DEAD box motif is present at residues 165-168; that stretch reads DEAD. In terms of domain architecture, Helicase C-terminal spans 245 to 390; it reads RLLQTLIEEE…VSKYNPEALM (146 aa). Residues 393-421 are disordered; the sequence is LPKPLRLTRSRPGNGPRRTGAPRNRRRSG. Positions 403 to 414 are enriched in low complexity; that stretch reads RPGNGPRRTGAP.

It belongs to the DEAD box helicase family. RhlB subfamily. Component of the RNA degradosome, which is a multiprotein complex involved in RNA processing and mRNA degradation.

Its subcellular location is the cytoplasm. The catalysed reaction is ATP + H2O = ADP + phosphate + H(+). Functionally, DEAD-box RNA helicase involved in RNA degradation. Has RNA-dependent ATPase activity and unwinds double-stranded RNA. The sequence is that of ATP-dependent RNA helicase RhlB from Citrobacter koseri (strain ATCC BAA-895 / CDC 4225-83 / SGSC4696).